An 847-amino-acid polypeptide reads, in one-letter code: Glycogen phosphorylase, liver form (847 aa).

Ala2 is modified (N-acetylalanine). Ser15 carries the phosphoserine; by PHK; in form phosphorylase a modification. AMP contacts are provided by residues 43–45 (DRN), Tyr76, and Arg310. Residue Lys364 is modified to N6-succinyllysine. N6-acetyllysine is present on Lys470. Phosphoserine occurs at positions 524, 561, and 639. At Lys681 the chain carries N6-(pyridoxal phosphate)lysine. An N6-acetyllysine modification is found at Lys796.

It belongs to the glycogen phosphorylase family. In terms of assembly, homodimer; enzymatically active. Interacts with PPP1R3B; recruits the phosphatase PP1 which dephosphorylates and inactivates PYGL/glycogen phosphorylase. Pyridoxal 5'-phosphate serves as cofactor. In terms of processing, acetylation, which is up-regulated by glucose and insulin and down-regulated by glucagon, inhibits the glycogen phosphorylase activity by promoting PPP1R3B-mediated recruitment of phosphatase PP1 and Ser-15 dephosphorylation. Post-translationally, phosphorylation at Ser-15 converts inactive phosphorylase b into active phosphorylase a. Dephosphorylation of Ser-15 by phosphatase PP1 inactivates the enzyme.

Its subcellular location is the cytoplasm. The protein resides in the cytosol. It carries out the reaction [(1-&gt;4)-alpha-D-glucosyl](n) + phosphate = [(1-&gt;4)-alpha-D-glucosyl](n-1) + alpha-D-glucose 1-phosphate. Allosterically regulated through the non-covalent binding of metabolites, being activated by AMP and inhibited by ATP, ADP, and glucose-6-phosphate. The activity is also controlled by post-translational modifications including phosphorylation and acetylation. Functionally, allosteric enzyme that catalyzes the rate-limiting step in glycogen catabolism, the phosphorolytic cleavage of glycogen to produce glucose-1-phosphate, and plays a central role in maintaining cellular and organismal glucose homeostasis. The polypeptide is Glycogen phosphorylase, liver form (Homo sapiens (Human)).